The chain runs to 545 residues: Glucose-6-phosphate isomerase (545 aa).

The Proton donor role is filled by E351. Residues H382 and K510 contribute to the active site.

This sequence belongs to the GPI family.

It localises to the cytoplasm. It catalyses the reaction alpha-D-glucose 6-phosphate = beta-D-fructose 6-phosphate. It functions in the pathway carbohydrate biosynthesis; gluconeogenesis. It participates in carbohydrate degradation; glycolysis; D-glyceraldehyde 3-phosphate and glycerone phosphate from D-glucose: step 2/4. In terms of biological role, catalyzes the reversible isomerization of glucose-6-phosphate to fructose-6-phosphate. In Shewanella oneidensis (strain ATCC 700550 / JCM 31522 / CIP 106686 / LMG 19005 / NCIMB 14063 / MR-1), this protein is Glucose-6-phosphate isomerase.